Consider the following 707-residue polypeptide: Zinc finger protein 60 (707 aa).

Residues 14–86 form the KRAB domain; it reads VTFRDVAVDF…VKKETGRPSQ (73 aa). C2H2-type zinc fingers lie at residues 173–195, 201–223, 229–251, 257–282, 288–310, 316–338, 344–366, 372–394, 400–422, 428–450, 456–478, 484–506, 512–534, 540–562, 568–590, 596–618, 624–646, 652–674, and 680–702; these read YKCKDCGKCFGCKSNLHQHESIH, YECKDCGKTFRLPQMLSRHQKSH, FECNICGKSFHLPTLLQYHKNIH, FECEECGKSFKSFNRISTLFQHRTIH, YKCNVCGKAFNRRSNLLQHQKIH, FHCKVCGKAFTVLAQLTRHENIH, FECKQCGKIFSNGSYLLRHYDTH, FECNICGKAFRLHLYLSEHQKTH, FKCKLCESAFRRKYQLSEHQRIH, YQCKDCWEFFRRRSNFIEHQSIH, FECKDCGKVFRLNIHLIRHQRFH, FECKECGKAFHFSSQLNNHKTSH, FECKECGKSFKRVSSLVEHRIIH, YKCNACGRAFNRRSNLMQHEKIH, FECKDCGKAFTVLAQLTRHQTIH, YECEQCGSAFRLPYQLTQHQRIH, FQCKECGRAFVRSTGLRIHERIH, FQCKECGEAFQYHYQFLGHFRIH, and YECSECGKYFTYGRDLKVHQSIH.

The protein belongs to the krueppel C2H2-type zinc-finger protein family. Expressed widely and evenly in most adult mouse tissues.

The protein resides in the nucleus. May have a role during differentiation processes. The chain is Zinc finger protein 60 (Zfp60) from Mus musculus (Mouse).